We begin with the raw amino-acid sequence, 320 residues long: Annexin A5 (320 aa).

Alanine 2 carries the post-translational modification N-acetylalanine. Annexin repeat units follow at residues phenylalanine 15–lysine 86, proline 87–glutamine 158, alanine 170–lysine 242, and serine 246–glycine 317. A Glycyl lysine isopeptide (Lys-Gly) (interchain with G-Cter in SUMO1); alternate cross-link involves residue lysine 29. Lysine 29 is covalently cross-linked (Glycyl lysine isopeptide (Lys-Gly) (interchain with G-Cter in SUMO2); alternate). At serine 37 the chain carries Phosphoserine. 5 positions are modified to N6-acetyllysine: lysine 70, lysine 76, lysine 79, lysine 97, and lysine 101. N6-succinyllysine is present on lysine 290. The [IL]-x-C-x-x-[DE] motif signature appears at leucine 314 to aspartate 319.

The protein belongs to the annexin family. Monomer. Binds ATRX and EIF5B. Interacts with hepatitis B virus (HBV). In terms of processing, S-nitrosylation is induced by interferon-gamma and oxidatively-modified low-densitity lipoprotein (LDL(ox)) possibly implicating the iNOS-S100A8/9 transnitrosylase complex.

Functionally, this protein is an anticoagulant protein that acts as an indirect inhibitor of the thromboplastin-specific complex, which is involved in the blood coagulation cascade. This chain is Annexin A5 (ANXA5), found in Homo sapiens (Human).